We begin with the raw amino-acid sequence, 396 residues long: Pyruvate dehydrogenase E1 component subunit alpha type I, mitochondrial (396 aa).

A mitochondrion-targeting transit peptide spans 1–25; it reads MIFVFANIFKVPTVSPSVMAISVRL. Positions 88, 114, 115, 153, 161, 163, 192, 193, 194, 221, and 223 each coordinate pyruvate. The thiamine diphosphate site is built by Y114 and R115. Positions 161, 163, 192, 193, 194, and 221 each coordinate thiamine diphosphate. D192 is a Mg(2+) binding site. Mg(2+) is bound by residues N221 and Y223. H288 contacts thiamine diphosphate. S289 and S296 each carry phosphoserine.

In terms of assembly, heterotetramer of two PDHA1 and two PDHB subunits. The heterotetramer interacts with DLAT, and is part of the multimeric pyruvate dehydrogenase complex that contains multiple copies of pyruvate dehydrogenase (E1), dihydrolipoamide acetyltransferase (DLAT, E2) and lipoamide dehydrogenase (DLD, E3). Thiamine diphosphate serves as cofactor. Requires Mg(2+) as cofactor.

The protein localises to the mitochondrion matrix. The catalysed reaction is N(6)-[(R)-lipoyl]-L-lysyl-[protein] + pyruvate + H(+) = N(6)-[(R)-S(8)-acetyldihydrolipoyl]-L-lysyl-[protein] + CO2. With respect to regulation, pyruvate dehydrogenase activity is inhibited by phosphorylation of PDHA1; it is reactivated by dephosphorylation. The pyruvate dehydrogenase complex catalyzes the overall conversion of pyruvate to acetyl-CoA and CO(2), and thereby links the glycolytic pathway to the tricarboxylic cycle. The sequence is that of Pyruvate dehydrogenase E1 component subunit alpha type I, mitochondrial from Ascaris suum (Pig roundworm).